Reading from the N-terminus, the 292-residue chain is Phosphatidylserine decarboxylase proenzyme (292 aa).

Residues Asp-89, His-146, and Ser-252 each act as charge relay system; for autoendoproteolytic cleavage activity in the active site. Ser-252 (schiff-base intermediate with substrate; via pyruvic acid; for decarboxylase activity) is an active-site residue. The residue at position 252 (Ser-252) is a Pyruvic acid (Ser); by autocatalysis.

The protein belongs to the phosphatidylserine decarboxylase family. PSD-B subfamily. Prokaryotic type I sub-subfamily. Heterodimer of a large membrane-associated beta subunit and a small pyruvoyl-containing alpha subunit. It depends on pyruvate as a cofactor. In terms of processing, is synthesized initially as an inactive proenzyme. Formation of the active enzyme involves a self-maturation process in which the active site pyruvoyl group is generated from an internal serine residue via an autocatalytic post-translational modification. Two non-identical subunits are generated from the proenzyme in this reaction, and the pyruvate is formed at the N-terminus of the alpha chain, which is derived from the carboxyl end of the proenzyme. The autoendoproteolytic cleavage occurs by a canonical serine protease mechanism, in which the side chain hydroxyl group of the serine supplies its oxygen atom to form the C-terminus of the beta chain, while the remainder of the serine residue undergoes an oxidative deamination to produce ammonia and the pyruvoyl prosthetic group on the alpha chain. During this reaction, the Ser that is part of the protease active site of the proenzyme becomes the pyruvoyl prosthetic group, which constitutes an essential element of the active site of the mature decarboxylase.

It localises to the cell membrane. It carries out the reaction a 1,2-diacyl-sn-glycero-3-phospho-L-serine + H(+) = a 1,2-diacyl-sn-glycero-3-phosphoethanolamine + CO2. It participates in phospholipid metabolism; phosphatidylethanolamine biosynthesis; phosphatidylethanolamine from CDP-diacylglycerol: step 2/2. Functionally, catalyzes the formation of phosphatidylethanolamine (PtdEtn) from phosphatidylserine (PtdSer). This Shewanella sp. (strain MR-7) protein is Phosphatidylserine decarboxylase proenzyme.